The following is a 216-amino-acid chain: Protein Syd (216 aa).

This sequence belongs to the Syd family.

The protein localises to the cell inner membrane. Its function is as follows. Interacts with the SecY protein in vivo. May bind preferentially to an uncomplexed state of SecY, thus functioning either as a chelating agent for excess SecY in the cell or as a regulatory factor that negatively controls the translocase function. This Shewanella baltica (strain OS195) protein is Protein Syd.